Here is a 410-residue protein sequence, read N- to C-terminus: MAMAWLMGLGLALASVLWVELVRDCYHALAHVWSPLYRLHGWHHRVFRSDLSVVSTEIYQKAHWYNDVPEALVMLAFGIWPPLLTWMWQGFSQWPLILAASAGMVYTLGFLLSAIARGVGLPNADEITDLTHRPGPFLTPPAPWMVNRTYHWRHHFDDPNAYFCGTLTLVDKMLGTALSLKGKKIAVTGASGGFGQALLQELHQQGAKAIAITSCGQEVTVIGAEKTIPIRTEQWCIGQEDQLKDLLAEIDVLVINHGVNVHQRRDGQAIQEAYEVNTFSALRLMELFLATVKTNRHIATKEIWVNTSEAEVNPAFSPLYELSKRALGDVVTLKRLDSPCVIRKLILGPFKSKLNPVGIMSAAWVARQVVKGVKRDSRNIIVTINPITFIAFPVKEFFVSLYFRCFTKKS.

Residues 1-14 (MAMAWLMGLGLALA) form the signal peptide. 2 helical membrane passes run 71 to 91 (ALVM…WQGF) and 96 to 116 (LILA…SAIA). The Proton acceptor role is filled by Y320. The chain crosses the membrane as a helical span at residues 380 to 400 (IIVTINPITFIAFPVKEFFVS).

Belongs to the short-chain dehydrogenases/reductases (SDR) family.

Its subcellular location is the membrane. It carries out the reaction a 1,2-diacyl-3-O-(beta-D-glucopyranosyl)-sn-glycerol = a 1,2-diacyl-3-O-(beta-D-galactosyl)-sn-glycerol. Its function is as follows. Involved in the biosynthesis of galactolipids found in the photosynthetic membranes. Catalyzes the isomerization of monoglucosyldiacylglycerol (GlcDG) to yield monogalactosyldiacylglycerol (MGDG). The chain is Monoglucosyldiacylglycerol epimerase from Synechocystis sp. (strain ATCC 27184 / PCC 6803 / Kazusa).